The primary structure comprises 213 residues: Protein ras-1 (213 aa).

15–22 (GGGGVGKS) is a binding site for GTP. Positions 37–45 (YDPTIEDSY) match the Effector region motif. GTP contacts are provided by residues 62–66 (DTAGQ) and 121–124 (NKYD). Cys210 carries the cysteine methyl ester modification. Residue Cys210 is the site of S-farnesyl cysteine attachment. Residues 211–213 (IMM) constitute a propeptide, removed in mature form.

The protein belongs to the small GTPase superfamily. Ras family.

The protein localises to the cell membrane. The enzyme catalyses GTP + H2O = GDP + phosphate + H(+). Its function is as follows. Ras proteins bind GDP/GTP and possess intrinsic GTPase activity. The polypeptide is Protein ras-1 (ras-1) (Neurospora crassa (strain ATCC 24698 / 74-OR23-1A / CBS 708.71 / DSM 1257 / FGSC 987)).